We begin with the raw amino-acid sequence, 214 residues long: Adenylate kinase (214 aa).

Residue 10 to 15 (GAGKGT) coordinates ATP. The tract at residues 30-59 (STGDMLRSAVKAGTELGLKAKALMDHGKLV) is NMP. AMP contacts are provided by residues T31, R36, 57–59 (KLV), 85–88 (GFPR), and Q92. The interval 122 to 159 (GRRIHAPSGRVYHIKFNPPVVENKDDVTGEELTVRKDD) is LID. ATP-binding positions include R123 and 132 to 133 (VY). Residues R156 and R167 each coordinate AMP. R200 is a binding site for ATP.

It belongs to the adenylate kinase family. In terms of assembly, monomer.

It localises to the cytoplasm. It catalyses the reaction AMP + ATP = 2 ADP. The protein operates within purine metabolism; AMP biosynthesis via salvage pathway; AMP from ADP: step 1/1. Its function is as follows. Catalyzes the reversible transfer of the terminal phosphate group between ATP and AMP. Plays an important role in cellular energy homeostasis and in adenine nucleotide metabolism. The polypeptide is Adenylate kinase (Photorhabdus laumondii subsp. laumondii (strain DSM 15139 / CIP 105565 / TT01) (Photorhabdus luminescens subsp. laumondii)).